The sequence spans 215 residues: Nascent polypeptide-associated complex subunit alpha (215 aa).

Residues 1–81 (MPGEATETVP…SEKKARKAMS (81 aa)) are disordered. Over residues 9 to 21 (VPVTEQEMQQPQV) the composition is skewed to polar residues. Over residues 29 to 42 (SDSDDSVPELEEQD) the composition is skewed to acidic residues. The span at 43 to 57 (SAQTQTQQAQLAAAA) shows a compositional bias: low complexity. Residues 70-135 (SRSEKKARKA…AKIEDLSQQA (66 aa)) enclose the NAC-A/B domain. Residues 176–213 (VEVKDIELVMSQANVSRAKAVRALKNNNNDIVNAIMEL) form the UBA domain.

It belongs to the NAC-alpha family.

Its function is as follows. May promote appropriate targeting of ribosome-nascent polypeptide complexes. The protein is Nascent polypeptide-associated complex subunit alpha (naca) of Oreochromis niloticus (Nile tilapia).